The chain runs to 97 residues: NADH dehydrogenase [ubiquinone] 1 alpha subcomplex subunit 2 (97 aa).

Cys19 and Cys53 are joined by a disulfide.

This sequence belongs to the complex I NDUFA2 subunit family. Complex I is composed of at least 49 different subunits.

It localises to the mitochondrion inner membrane. Functionally, accessory subunit of the mitochondrial membrane respiratory chain NADH dehydrogenase (Complex I), that is believed not to be involved in catalysis. Complex I functions in the transfer of electrons from NADH to the respiratory chain. The immediate electron acceptor for the enzyme is believed to be ubiquinone. This chain is NADH dehydrogenase [ubiquinone] 1 alpha subcomplex subunit 2, found in Arabidopsis thaliana (Mouse-ear cress).